A 158-amino-acid chain; its full sequence is Ribosome-binding factor A (158 aa).

Residues 127-158 (RQGAVHAGDADPYKESAAEEPAAYEDDERRPD) are disordered. Residues 134 to 143 (GDADPYKESA) show a composition bias toward basic and acidic residues.

It belongs to the RbfA family. As to quaternary structure, monomer. Binds 30S ribosomal subunits, but not 50S ribosomal subunits or 70S ribosomes.

Its subcellular location is the cytoplasm. Its function is as follows. One of several proteins that assist in the late maturation steps of the functional core of the 30S ribosomal subunit. Associates with free 30S ribosomal subunits (but not with 30S subunits that are part of 70S ribosomes or polysomes). Required for efficient processing of 16S rRNA. May interact with the 5'-terminal helix region of 16S rRNA. In Mycobacteroides abscessus (strain ATCC 19977 / DSM 44196 / CCUG 20993 / CIP 104536 / JCM 13569 / NCTC 13031 / TMC 1543 / L948) (Mycobacterium abscessus), this protein is Ribosome-binding factor A.